A 479-amino-acid polypeptide reads, in one-letter code: MSILVKNNIHWVGQRDWEVRDFHGTEYKTLRGSSYNSYLIREEKNVLIDTVDHKFSREFVQNLRSEIDLADIDYIIINHAEEDHAGALTELMAQIPDAPIYCTANAIDSINGHHHHPEWNFKVVKTGDTLDIGNGKQLIFVETPMLHWPDSMMTYMTGDAVLFSNDAFGQHYCDERLFNDEVDQTELFEQCQRYYANILTPFSRLVTPKITEILGFNLPVDMIATSHGVVWRDNPTQIVELYLKWAADYQEDRITIFYDTMSNNTRIMADAIAQGINEVDPNVAVKIFNVARSDKNEILTNVFRSKGVLVGTSTMNNVMMPKIAGLVEEMTGLRFRNKRASAFGSHGWSGGAVDRLSTRLQDAGFEMSLSLKAKWRPDLDALELCRQHGRDIARQWALAPLPETTQKTTPAEEITTCAAADLGPKMQCSVCQWIYDPALGEPLQDVAPGTPWSDVPDNFLCPECSLGKDVFDVLATEAK.

Positions 30 to 210 (LRGSSYNSYL…PFSRLVTPKI (181 aa)) are zinc metallo-hydrolase. Residues histidine 79, glutamate 81, aspartate 83, histidine 147, aspartate 166, and histidine 227 each coordinate Fe cation. In terms of domain architecture, Flavodoxin-like spans 254 to 393 (ITIFYDTMSN…LCRQHGRDIA (140 aa)). FMN is bound by residues 260–264 (TMSNN) and 342–369 (AFGSHGWSGGAVDRLSTRLQDAGFEMSL). In terms of domain architecture, Rubredoxin-like spans 423–474 (GPKMQCSVCQWIYDPALGEPLQDVAPGTPWSDVPDNFLCPECSLGKDVFDVL). Cysteine 428, cysteine 431, cysteine 461, and cysteine 464 together coordinate Fe cation.

The protein in the N-terminal section; belongs to the zinc metallo-hydrolase group 3 family. In terms of assembly, homotetramer. Requires Fe cation as cofactor. It depends on FMN as a cofactor.

Its subcellular location is the cytoplasm. Its pathway is nitrogen metabolism; nitric oxide reduction. Its function is as follows. Anaerobic nitric oxide reductase; uses NADH to detoxify nitric oxide (NO), protecting several 4Fe-4S NO-sensitive enzymes. Has at least 2 reductase partners, only one of which (NorW, flavorubredoxin reductase) has been identified. NO probably binds to the di-iron center; electrons enter from the NorW at rubredoxin and are transferred sequentially to the FMN center and the di-iron center. Also able to function as an aerobic oxygen reductase. This chain is Anaerobic nitric oxide reductase flavorubredoxin, found in Salmonella arizonae (strain ATCC BAA-731 / CDC346-86 / RSK2980).